A 365-amino-acid polypeptide reads, in one-letter code: Forkhead box protein E4 (365 aa).

Residues 1–13 (MDSPDSVRVKCES) are compositionally biased toward basic and acidic residues. The segment at 1–46 (MDSPDSVRVKCESKGSCSPEEGLNNGLPEEHNQASGGRRRKRPVQR) is disordered. Positions 48–142 (KPPYSYIALI…DNGSFLRRRK (95 aa)) form a DNA-binding region, fork-head.

As to expression, first expressed at the end of gastrulation (stage 13) in the anterior ectodermal placode. During intermediate neural plate stages (stages 14-16), expression expands to the presumptive nasal ectoderm (PNE) and the presumptive lens ectoderm (PLE). By stages 18-21, expression begins to deplete in the PNE, while intensifying in the PLE so that by late neural stages (stages 22), expression is restricted to the PLE. Throughout tailbud stages (stage 23-31), expression is maintained in the lens placode and lens vesicle. In the maturing lens (stage 32-onwards), expression is restricted to the anterior lens epithelium, where it remains during the tadpole stage. In tadpoles there is additional expression in the ventral midline of the pharynx. Expression continues in the adult eye.

The protein resides in the nucleus. Functionally, probable transcription factor. Mediates lens formation in the embryo by promoting the proliferation of the specified lens ectoderm and suppressing its terminal differentiation. This chain is Forkhead box protein E4, found in Xenopus laevis (African clawed frog).